We begin with the raw amino-acid sequence, 802 residues long: Potassium channel AKT2/3 (802 aa).

Over 1–79 (MDLKYSASHC…PMDSRYRCWE (79 aa)) the chain is Cytoplasmic. Residues 80 to 100 (FYMVLLVAYSAWVYPFEVAFL) form a helical membrane-spanning segment. The Extracellular portion of the chain corresponds to 101–109 (NSSPKRNLC). A helical membrane pass occupies residues 110–130 (IADNIVDLFFAVDIVLTFFVA). Topologically, residues 131-153 (YIDERTQLLVREPKQIAVRYLST) are cytoplasmic. The helical transmembrane segment at 154-174 (WFLMDVASTIPFDAIGYLITG) threads the bilayer. The Extracellular portion of the chain corresponds to 175-183 (TSTLNITCN). A glycan (N-linked (GlcNAc...) asparagine) is linked at asparagine 179. A helical; Voltage-sensor membrane pass occupies residues 184 to 204 (LLGLLRFWRLRRVKHLFTRLE). The Cytoplasmic portion of the chain corresponds to 205-218 (KDIRYSYFWIRCFR). Residues 219–239 (LLSVTLFLVHCAGCSYYLIAD) traverse the membrane as a helical segment. The Extracellular portion of the chain corresponds to 240–265 (RYPHQGKTWTDAIPNFTETSLSIRYI). The N-linked (GlcNAc...) asparagine glycan is linked to asparagine 254. Positions 266–285 (AAIYWSITTMTTVGYGDLHA) form an intramembrane region, pore-forming. The Extracellular segment spans residues 286–288 (SNT). The helical transmembrane segment at 289-309 (IEMVFITVYMLFNLGLTAYLI) threads the bilayer. Topologically, residues 310–802 (GNMTNLVVEG…KLYFVVNKII (493 aa)) are cytoplasmic. 394 to 513 (LFKGVSREIL…ATMLKNFLQH (120 aa)) is a binding site for a nucleoside 3',5'-cyclic phosphate. ANK repeat units follow at residues 540 to 569 (NIAS…SPDI), 573 to 602 (KGKT…NIHI), 606 to 636 (NGNS…SDPH), 637 to 666 (IAGD…NVDT), and 670 to 699 (HGVT…DVVC). One can recognise a KHA domain in the interval 725–802 (RVSIYRGHPL…KLYFVVNKII (78 aa)).

It belongs to the potassium channel family. Plant (TC 1.A.1.4) subfamily. The potassium channel is probably composed of a homo- or heterotetrameric complex of pore-forming subunits. Interacts with the phosphatase PPC2A and the kinase CIPK6. May interact with AKT1, KAT1 and KAT3. Interacts with SLAC1. Post-translationally, dephosphorylated by PP2CA. In terms of tissue distribution, expressed mainly in the phloem tissues throughout the plant but also, at a lower level, in leaf epiderm, mesophyll and guard cells.

The protein resides in the endoplasmic reticulum membrane. Functionally, highly selective and weak inward-rectifying potassium channel. Plays a role in both loading and unloading potassium into/from the phloem sap. Seems to control sugar loading into phloem via a voltage-dependent process. Blocked by physiological concentrations of external calcium and by external acidification. May interact with the cytoskeleton or with regulatory proteins. Dephosphorylation by PP2CA not only leads to the inhibition of potassium currents but also to an increase of the voltage-dependence of the channel. Regulated by the CBL4/CIPK6 calcium sensor/protein kinase complex via a kinase interaction-dependent but phosphorylation-independent translocation of the channel to the plasma membrane. The sequence is that of Potassium channel AKT2/3 (AKT2) from Arabidopsis thaliana (Mouse-ear cress).